The primary structure comprises 172 residues: Cytochrome c oxidase subunit 4 isoform 2, mitochondrial (172 aa).

Residues 1 to 18 (MFSRATRSLVMKTGGLRT) constitute a mitochondrion transit peptide. Positions 1–33 (MFSRATRSLVMKTGGLRTQGTHSPGSAASSSQR) are disordered. Polar residues predominate over residues 16 to 33 (LRTQGTHSPGSAASSSQR). Topologically, residues 19-101 (QGTHSPGSAA…TFAEMNHRSN (83 aa)) are mitochondrial matrix. The chain crosses the membrane as a helical span at residues 102 to 127 (EWKTVMGCVFFFIGFTALVIWWQRVY). Residues 128 to 172 (VFPKKVVTLTEERKAQQLQRLLDMKSNPIQGLSAHWDYEKKEWKK) are Mitochondrial intermembrane-facing.

The protein belongs to the cytochrome c oxidase IV family. Component of the cytochrome c oxidase (complex IV, CIV), a multisubunit enzyme composed of 14 subunits. The complex is composed of a catalytic core of 3 subunits MT-CO1, MT-CO2 and MT-CO3, encoded in the mitochondrial DNA, and 11 supernumerary subunits COX4I, COX5A, COX5B, COX6A, COX6B, COX6C, COX7A, COX7B, COX7C, COX8 and NDUFA4, which are encoded in the nuclear genome. The complex exists as a monomer or a dimer and forms supercomplexes (SCs) in the inner mitochondrial membrane with NADH-ubiquinone oxidoreductase (complex I, CI) and ubiquinol-cytochrome c oxidoreductase (cytochrome b-c1 complex, complex III, CIII), resulting in different assemblies (supercomplex SCI(1)III(2)IV(1) and megacomplex MCI(2)III(2)IV(2)). As to expression, highly expressed in lung.

Its subcellular location is the mitochondrion inner membrane. It participates in energy metabolism; oxidative phosphorylation. Component of the cytochrome c oxidase, the last enzyme in the mitochondrial electron transport chain which drives oxidative phosphorylation. The respiratory chain contains 3 multisubunit complexes succinate dehydrogenase (complex II, CII), ubiquinol-cytochrome c oxidoreductase (cytochrome b-c1 complex, complex III, CIII) and cytochrome c oxidase (complex IV, CIV), that cooperate to transfer electrons derived from NADH and succinate to molecular oxygen, creating an electrochemical gradient over the inner membrane that drives transmembrane transport and the ATP synthase. Cytochrome c oxidase is the component of the respiratory chain that catalyzes the reduction of oxygen to water. Electrons originating from reduced cytochrome c in the intermembrane space (IMS) are transferred via the dinuclear copper A center (CU(A)) of subunit 2 and heme A of subunit 1 to the active site in subunit 1, a binuclear center (BNC) formed by heme A3 and copper B (CU(B)). The BNC reduces molecular oxygen to 2 water molecules using 4 electrons from cytochrome c in the IMS and 4 protons from the mitochondrial matrix. This chain is Cytochrome c oxidase subunit 4 isoform 2, mitochondrial (Cox4i2), found in Rattus norvegicus (Rat).